Reading from the N-terminus, the 1368-residue chain is DNA-directed RNA polymerase subunit beta (1368 aa).

This sequence belongs to the RNA polymerase beta chain family. As to quaternary structure, the RNAP catalytic core consists of 2 alpha, 1 beta, 1 beta' and 1 omega subunit. When a sigma factor is associated with the core the holoenzyme is formed, which can initiate transcription.

It catalyses the reaction RNA(n) + a ribonucleoside 5'-triphosphate = RNA(n+1) + diphosphate. Its function is as follows. DNA-dependent RNA polymerase catalyzes the transcription of DNA into RNA using the four ribonucleoside triphosphates as substrates. The sequence is that of DNA-directed RNA polymerase subunit beta from Burkholderia lata (strain ATCC 17760 / DSM 23089 / LMG 22485 / NCIMB 9086 / R18194 / 383).